A 401-amino-acid chain; its full sequence is tRNA (guanine-N(7)-)-methyltransferase non-catalytic subunit wuho (401 aa).

Residues 45–85 are disordered; it reads KGRPRKYFDADSDSDEEQQNGDEPGTGKNNGGGDTGKKDQD. The segment covering 54-64 has biased composition (acidic residues); sequence ADSDSDEEQQN. WD repeat units follow at residues 86–125, 174–213, and 217–255; these read DQTN…RTLK, GHMS…NIET, and GHTE…ELAR.

Belongs to the WD repeat TRM82 family. In terms of assembly, forms a heterodimer with the catalytic subunit.

Its subcellular location is the nucleus. The protein operates within tRNA modification; N(7)-methylguanine-tRNA biosynthesis. Required for the formation of N(7)-methylguanine at position 46 (m7G46) in tRNA. In the complex, it is required to stabilize and induce conformational changes of the catalytic subunit. This chain is tRNA (guanine-N(7)-)-methyltransferase non-catalytic subunit wuho, found in Culex quinquefasciatus (Southern house mosquito).